Here is a 126-residue protein sequence, read N- to C-terminus: Acidic phospholipase A2 3 (126 aa).

Residues 1-7 (SNRPMPL) constitute a propeptide that is removed on maturation. Disulfide bonds link Cys18-Cys78, Cys33-Cys125, Cys35-Cys51, Cys50-Cys106, Cys57-Cys99, Cys67-Cys92, and Cys85-Cys97. Ca(2+) contacts are provided by Tyr34, Gly36, and Gly38. His54 is an active-site residue. A Ca(2+)-binding site is contributed by Asp55. Asp100 is a catalytic residue.

This sequence belongs to the phospholipase A2 family. Group I subfamily. D49 sub-subfamily. Ca(2+) is required as a cofactor. In terms of tissue distribution, expressed by the venom gland.

The protein localises to the secreted. It carries out the reaction a 1,2-diacyl-sn-glycero-3-phosphocholine + H2O = a 1-acyl-sn-glycero-3-phosphocholine + a fatty acid + H(+). In terms of biological role, PLA2 catalyzes the calcium-dependent hydrolysis of the 2-acyl groups in 3-sn-phosphoglycerides. This chain is Acidic phospholipase A2 3, found in Naja sagittifera (Andaman cobra).